A 269-amino-acid chain; its full sequence is Protein CURLY FLAG LEAF 1 (269 aa).

Residues 17-44 are disordered; sequence SLNGGGGGGGGRRRGRRAAAAEGSDDSE. The EAR signature appears at 47–52; that stretch reads TVELNS. A WW domain is found at 54 to 88; it reads VALPYHWEQCLDIRTGQVYYINWEDGTRTTIDPRS. Disordered stretches follow at residues 83–133 and 174–218; these read TIDP…SGYT and GDDE…SGAG. Low complexity-rich tracts occupy residues 87-106, 121-133, and 180-202; these read RSSSAYSPSPASRSASSSSR, AAAASTTTSSGYT, and SSSSSSSSSSSSASSSRGSAVSS. A compositionally biased stretch (polar residues) spans 203-212; it reads TLSSFSPTDE.

Binds to HDG1.

Its function is as follows. Negatively regulates the cuticle development probably by interacting with the HD-ZIP IV transcription factor HDG1. This chain is Protein CURLY FLAG LEAF 1, found in Oryza sativa subsp. indica (Rice).